Consider the following 390-residue polypeptide: MYTSLLVRYGEISLKGNNRPYFEDKLLANMRRALAGLPPRRMRKTFGRVFVELHDDLEAVARRLQRVFGIVSMSPVATAPLELEAIKKAALAVLKDSPGSTFKVQAQRPNKRFPLTSPEVNQELGAYLLTHSQGQRVDVHHPDRVIHVEIRDEGAYIYSRIIPGPGGLPVGVTGRGLLLISGGIDSPVAGYMGMKRGLELTALHFHSFPFTSERSKEKVIDLCRVLAGYSGPLRLVVAPFTNIQKAIRQNCPQEFYVTIMRRMMFRIARAVAAKEEAPAILTGESLGQVASQTLQSMAVINKVVDLPVLRPLVAWDKSEIIEVARRIGTYDISIRPYEDCCTLFVPKHPATKPPLARVEAAEKNLAVVELVAECLENLEILTVEPEADVV.

The 104-residue stretch at 58 to 161 (EAVARRLQRV…DEGAYIYSRI (104 aa)) folds into the THUMP domain. ATP is bound by residues 179 to 180 (LI), 204 to 205 (HF), R261, G283, and Q292.

This sequence belongs to the ThiI family.

The protein resides in the cytoplasm. It catalyses the reaction [ThiI sulfur-carrier protein]-S-sulfanyl-L-cysteine + a uridine in tRNA + 2 reduced [2Fe-2S]-[ferredoxin] + ATP + H(+) = [ThiI sulfur-carrier protein]-L-cysteine + a 4-thiouridine in tRNA + 2 oxidized [2Fe-2S]-[ferredoxin] + AMP + diphosphate. The enzyme catalyses [ThiS sulfur-carrier protein]-C-terminal Gly-Gly-AMP + S-sulfanyl-L-cysteinyl-[cysteine desulfurase] + AH2 = [ThiS sulfur-carrier protein]-C-terminal-Gly-aminoethanethioate + L-cysteinyl-[cysteine desulfurase] + A + AMP + 2 H(+). The protein operates within cofactor biosynthesis; thiamine diphosphate biosynthesis. In terms of biological role, catalyzes the ATP-dependent transfer of a sulfur to tRNA to produce 4-thiouridine in position 8 of tRNAs, which functions as a near-UV photosensor. Also catalyzes the transfer of sulfur to the sulfur carrier protein ThiS, forming ThiS-thiocarboxylate. This is a step in the synthesis of thiazole, in the thiamine biosynthesis pathway. The sulfur is donated as persulfide by IscS. The sequence is that of Probable tRNA sulfurtransferase from Moorella thermoacetica (strain ATCC 39073 / JCM 9320).